The sequence spans 60 residues: MFAKLYRGLTYVTNKILSTLLSHHSIHYCINSFKPTTLAIIILLHPCCRCNVYIIRCIHH.

This is an uncharacterized protein from Saccharomyces cerevisiae (strain ATCC 204508 / S288c) (Baker's yeast).